The following is a 54-amino-acid chain: Large ribosomal subunit protein bL33 (54 aa).

The protein belongs to the bacterial ribosomal protein bL33 family.

The chain is Large ribosomal subunit protein bL33 from Corynebacterium jeikeium (strain K411).